Reading from the N-terminus, the 254-residue chain is MASAASASASAVVTPSSFRCVPTASCGLGARGKAPAPRRLLHDHAQGKKRAAATWSLKAGLWDSLRSGFLKSNNSTETVEPPSAPIEEEEPLPEELVLLERTLADGSTEQIIFSSAGDVNVYDLQALCDKVGWPRRPLTKIAASLRNSYLVATLHSVTTPSKAEGEERKQLIGMARATSDHAFNATIWDVLVDPSYQGQGLGKALMEKVIRTLLQRDISNITLFADNKVVDFYKNLGFEADPQGIKGMFWYPRF.

The transit peptide at methionine 1 to serine 83 directs the protein to the chloroplast. One can recognise an N-acetyltransferase domain in the interval valine 119–phenylalanine 254.

The protein localises to the plastid. It is found in the chloroplast. It localises to the nucleus. It carries out the reaction a 2-arylethylamine + acetyl-CoA = an N-acetyl-2-arylethylamine + CoA + H(+). The protein operates within aromatic compound metabolism; melatonin biosynthesis; melatonin from serotonin: step 1/2. In terms of biological role, catalyzes the N-acetylation of serotonin into N-acetylserotonin, the penultimate step in the synthesis of melatonin. Catalyzes in vitro the N-acetylation of tryptamine to produce N-acetyltryptamine, 5-methoxytryptamine to produce melatonin and tyramine to produce N-acetyltyramine. Acetyltransferase required for geminivirus infection and systemic spread. The polypeptide is Serotonin N-acetyltransferase 1, chloroplastic (Oryza sativa subsp. indica (Rice)).